The following is a 227-amino-acid chain: PKHD-type hydroxylase ACIAD0531 (227 aa).

One can recognise a Fe2OG dioxygenase domain in the interval histidine 78–serine 178. Residues histidine 96, aspartate 98, and histidine 159 each coordinate Fe cation. Position 169 (arginine 169) interacts with 2-oxoglutarate.

Fe(2+) is required as a cofactor. L-ascorbate serves as cofactor.

The sequence is that of PKHD-type hydroxylase ACIAD0531 from Acinetobacter baylyi (strain ATCC 33305 / BD413 / ADP1).